The primary structure comprises 363 residues: Methyltransferase pynC (363 aa).

Residues 199 to 200 (GG), Asp-225, 254 to 255 (SF), Arg-270, and Arg-271 each bind S-adenosyl-L-methionine.

The protein belongs to the class I-like SAM-binding methyltransferase superfamily. Cation-independent O-methyltransferase family.

It participates in secondary metabolite biosynthesis. Its function is as follows. Methyltransferase; part of the gene cluster that mediates the biosynthesis of pyranonigrins, a family of antioxidative compounds. The first step of pyranonigrins biosynthesis is performed by the hybrid PKS-NRPS synthetase that condenses 6 malonyl-CoA units to an acetyl starter unit, to form a 1,3,5-trioxotetradecane-6,8-dienyl-ACP. The enoyl reductase (ER) domain of pynA is likely to be functional during the first two rounds of polyketide chain extension, to generate the saturated C-C bonds of the alkyl side chain. PynA subsequently forms the amide bond between the acyl chain and L-serine. Although pynA has a terminal reductase domain, it appears to require the thioesterase pynI for the release of the straight-chain intermediate from pynA via the formation of a tetramic acid pyranonigrin J. The methyltransferase pynC then coverts pyranonigrin J to pyranonigrin I via N-methylation. The FAD-dependent monooxygenase pynG catalyzes an epoxidation-mediated cyclization to form the dihydro-gamma-pyrone moiety, followed by pynD-catalyzed oxidation of the alcohol to the ketone and enolization to yield the characteristic tetramic acid-fused gamma-pyrone core of pyranonigrin H. Pyranonigrin H is substrate of pynH for dehydration-mediated exo-methylene formation from the serine side chain to produce pyranonigrin E, before the oxidase pynE reduces the exo-methylene of pyranonigrin E into a pendant methyl to form pyranonigrin G. The FAD-linked oxidoreductase pynB performs the reverse reaction and converts pyranonigrin G back to pyranonigrin E. The sequence is that of Methyltransferase pynC from Aspergillus niger (strain ATCC MYA-4892 / CBS 513.88 / FGSC A1513).